The chain runs to 151 residues: Macrodomain Ter protein (151 aa).

Belongs to the MatP family. As to quaternary structure, homodimer.

The protein resides in the cytoplasm. Required for spatial organization of the terminus region of the chromosome (Ter macrodomain) during the cell cycle. Prevents early segregation of duplicated Ter macrodomains during cell division. Binds specifically to matS, which is a 13 bp signature motif repeated within the Ter macrodomain. This Photorhabdus laumondii subsp. laumondii (strain DSM 15139 / CIP 105565 / TT01) (Photorhabdus luminescens subsp. laumondii) protein is Macrodomain Ter protein.